We begin with the raw amino-acid sequence, 636 residues long: Methyl-CpG-binding domain protein 1 (636 aa).

One can recognise an MBD domain in the interval 1–69 (MAESWQDCPA…TLFDFRQGTL (69 aa)). Residues 75–113 (KTHPLAVPSKKKKKPSKPAKTKKQQVGLQRSEVRIETPQ) form a disordered region. The span at 83–97 (SKKKKKPSKPAKTKK) shows a compositional bias: basic residues. The Nuclear localization signal signature appears at 84–88 (KKKKK). Residue Lys-117 forms a Glycyl lysine isopeptide (Lys-Gly) (interchain with G-Cter in SUMO2) linkage. 2 CXXC-type zinc fingers span residues 187–234 (RMFK…RRCL) and 235–281 (RIME…RRCF). Cys-194, Cys-197, Cys-200, Cys-206, Cys-209, Cys-212, Cys-228, Cys-233, Cys-243, Cys-246, Cys-249, Cys-255, Cys-258, Cys-261, Cys-275, and Cys-280 together coordinate Zn(2+). The tract at residues 291–314 (GSKVASQRHSQAPPLPPHPASQYT) is disordered. Residue Lys-293 forms a Glycyl lysine isopeptide (Lys-Gly) (interchain with G-Cter in SUMO2) linkage. The CXXC-type 3 zinc finger occupies 348 to 396 (TNQRQNRKCGACAACLRRMDCGRCDFCCDKPKFGGGNQKRQKCRWRQCL). Residues Cys-356, Cys-359, Cys-362, Cys-368, Cys-371, Cys-374, Cys-390, and Cys-395 each contribute to the Zn(2+) site. Positions 407-474 (AGSGSGEGAG…GRGSVLPQPD (68 aa)) are disordered. Phosphoserine is present on Ser-409. Glycyl lysine isopeptide (Lys-Gly) (interchain with G-Cter in SUMO2) cross-links involve residues Lys-443 and Lys-461. Residues Lys-520 and Lys-559 each participate in a glycyl lysine isopeptide (Lys-Gly) (interchain with G-Cter in SUMO2); alternate cross-link. The disordered stretch occupies residues 543–589 (QSGFPSKAADPDLSPVKQEPPGPEEDGEEKKDDVSETTPAEEIGGVG). Residues 550 to 612 (AADPDLSPVK…RLRDAEAWLP (63 aa)) form a transcriptional repression domain (TRD) region.

In terms of assembly, interacts with OASL, ATF7IP, ATF7IP2 and BAHD1. Binds CHAF1A and the SUV39H1-CBX5 complex via the MBD domain. Binds MGP via the TRD domain. May be part of the MeCP1 complex. During DNA replication, it recruits SETDB1 to form a S phase-specific complex that facilitates methylation of H3 'Lys-9' during replication-coupled chromatin assembly and is at least composed of the CAF-1 subunit CHAF1A, MBD1 and SETDB1. Interacts with the Ten-1 ICD form of TENM1. Post-translationally, sumoylated, sumoylation may increase interaction with ATF7IP. Highly expressed in kidney, liver and brain. Detected at lower levels in heart, lung, skeletal muscle, spleen and testis.

It localises to the nucleus. Its subcellular location is the nucleus matrix. It is found in the nucleus speckle. The protein localises to the chromosome. Transcriptional repressor that binds CpG islands in promoters where the DNA is methylated at position 5 of cytosine within CpG dinucleotides. Binding is abolished by the presence of 7-mG that is produced by DNA damage by methylmethanesulfonate (MMS). Acts as transcriptional repressor and plays a role in gene silencing by recruiting ATF7IP, which in turn recruits factors such as the histone methyltransferase SETDB1. Probably forms a complex with SETDB1 and ATF7IP that represses transcription and couples DNA methylation and histone 'Lys-9' trimethylation. Isoform 1 can also repress transcription from unmethylated promoters. This chain is Methyl-CpG-binding domain protein 1, found in Mus musculus (Mouse).